The primary structure comprises 904 residues: Pentatricopeptide repeat-containing protein At4g30825, chloroplastic (904 aa).

A chloroplast-targeting transit peptide spans 1 to 61 (MGSLRFSIPL…SSTRVLDKIR (61 aa)). The disordered stretch occupies residues 75–94 (NSASAAPVERSRSSKLSGDQ). 20 PPR repeats span residues 173 to 203 (NFVA…LCGF), 209 to 243 (SYQV…GVRP), 244 to 274 (NVAT…MRKF), 278 to 312 (CESA…RVRL), 313 to 347 (KLEN…GFSP), 348 to 382 (NIIA…GLEP), 383 to 417 (DETS…GYKP), 418 to 452 (NSFN…GCQY), 487 to 521 (NQTS…DSAF), 522 to 553 (ESHL…MESD), 557 to 591 (NLHI…GVVL), 592 to 622 (DRIG…MDEQ), 628 to 662 (DVYL…GIHW), 663 to 697 (NQEM…GFTP), 698 to 732 (NTVT…GVVD), 733 to 766 (VISY…GFSV), 767 to 801 (SLEA…TSGP), 802 to 836 (DHYT…GLGP), 837 to 871 (DLCS…NIIP), and 872 to 904 (DKVT…QMGI).

Belongs to the PPR family. P subfamily.

Its subcellular location is the plastid. It localises to the chloroplast. This is Pentatricopeptide repeat-containing protein At4g30825, chloroplastic from Arabidopsis thaliana (Mouse-ear cress).